The following is a 162-amino-acid chain: MHYITPDLCDAYPELVQVVEPMFANYGGRDSFGGQMVTIKCHEDNSLVKEQVDLPGEGRVLVVDGGGSLRRALLGDMLAEKAAKNGWAGIVVYGCIRDVDVIAQADLGVQALASHPMKTDKRGIGDLNVPVTFGGVTFKPGEYLYADNNGIIVSPQALSMPE.

Residues 75–78 (GDML) and Arg97 contribute to the substrate site. An a divalent metal cation-binding site is contributed by Asp98.

It belongs to the class II aldolase/RraA-like family. Homotrimer. A divalent metal cation is required as a cofactor.

The enzyme catalyses 4-hydroxy-4-methyl-2-oxoglutarate = 2 pyruvate. It catalyses the reaction oxaloacetate + H(+) = pyruvate + CO2. Catalyzes the aldol cleavage of 4-hydroxy-4-methyl-2-oxoglutarate (HMG) into 2 molecules of pyruvate. Also contains a secondary oxaloacetate (OAA) decarboxylase activity due to the common pyruvate enolate transition state formed following C-C bond cleavage in the retro-aldol and decarboxylation reactions. The sequence is that of Putative 4-hydroxy-4-methyl-2-oxoglutarate aldolase from Ectopseudomonas mendocina (strain ymp) (Pseudomonas mendocina).